Reading from the N-terminus, the 195-residue chain is Ferredoxin-2, mitochondrial (195 aa).

Residues 1–61 constitute a mitochondrion transit peptide; sequence MAAAAAVRAG…RRLRTSIGVC (61 aa). Residues 81–182 form the 2Fe-2S ferredoxin-type domain; the sequence is NVVYIDRSGR…GMELTLPKVT (102 aa). [2Fe-2S] cluster-binding residues include Cys-117, Cys-123, Cys-126, and Cys-163.

Belongs to the adrenodoxin/putidaredoxin family. Component of the mitochondrial core iron-sulfur cluster (ISC) complex composed of NFS1, LYRM4, NDUFAB1, ISCU, FXN, and FDX2; this complex is a heterohexamer containing two copies of each monomer. Form a heterodimer complex with NFS1. It depends on [2Fe-2S] cluster as a cofactor.

Its subcellular location is the mitochondrion. The protein localises to the mitochondrion matrix. Functionally, electron donor, of the core iron-sulfur cluster (ISC) assembly complex, that acts to reduce the persulfide into sulfide during [2Fe-2S] clusters assembly on the scaffolding protein ISCU. The core iron-sulfur cluster (ISC) assembly complex is involved in the de novo synthesis of a [2Fe-2S] cluster, the first step of the mitochondrial iron-sulfur protein biogenesis. This process is initiated by the cysteine desulfurase complex (NFS1:LYRM4:NDUFAB1) that produces persulfide which is delivered on the scaffold protein ISCU in a FXN-dependent manner. Then this complex is stabilized by FDX2 which provides reducing equivalents to accomplish the [2Fe-2S] cluster assembly. Finally, the [2Fe-2S] cluster is transferred from ISCU to chaperone proteins, including HSCB, HSPA9 and GLRX5. Essential for coenzyme Q biosynthesis: together with FDXR, transfers the electrons required for the hydroxylation reaction performed by COQ6. This is Ferredoxin-2, mitochondrial from Danio rerio (Zebrafish).